A 178-amino-acid chain; its full sequence is uncharacterized protein (178 aa).

The helical transmembrane segment at 7–29 (FFVIFSILWGSLFLFSIIGSLGT) threads the bilayer.

It is found in the membrane. This is an uncharacterized protein from Bacillus subtilis (strain 168).